Consider the following 193-residue polypeptide: Outer-membrane lipoprotein LolB (193 aa).

An N-terminal signal peptide occupies residues 1–21 (MRPARRFLAALACVAGALLSA). A lipid anchor (N-palmitoyl cysteine) is attached at cysteine 22. The S-diacylglycerol cysteine moiety is linked to residue cysteine 22.

It belongs to the LolB family. Monomer.

Its subcellular location is the cell outer membrane. In terms of biological role, plays a critical role in the incorporation of lipoproteins in the outer membrane after they are released by the LolA protein. The sequence is that of Outer-membrane lipoprotein LolB from Azoarcus sp. (strain BH72).